Here is a 202-residue protein sequence, read N- to C-terminus: Orotate phosphoribosyltransferase (202 aa).

Residue 113–121 (EDIITTGGS) coordinates 5-phospho-alpha-D-ribose 1-diphosphate. The orotate site is built by T117 and R145.

This sequence belongs to the purine/pyrimidine phosphoribosyltransferase family. PyrE subfamily. As to quaternary structure, homodimer. Mg(2+) serves as cofactor.

It carries out the reaction orotidine 5'-phosphate + diphosphate = orotate + 5-phospho-alpha-D-ribose 1-diphosphate. It functions in the pathway pyrimidine metabolism; UMP biosynthesis via de novo pathway; UMP from orotate: step 1/2. Its function is as follows. Catalyzes the transfer of a ribosyl phosphate group from 5-phosphoribose 1-diphosphate to orotate, leading to the formation of orotidine monophosphate (OMP). In Nitratiruptor sp. (strain SB155-2), this protein is Orotate phosphoribosyltransferase.